The sequence spans 467 residues: Mothers against decapentaplegic homolog 2 (467 aa).

Ser2 is subject to N-acetylserine. A Phosphothreonine; by MAPK3 modification is found at Thr8. The MH1 domain maps to 10–176 (PVVKRLLGWK…YQRVETPVLP (167 aa)). Lys19 is modified (N6-acetyllysine). Positions 74, 149, 161, and 166 each coordinate Zn(2+). Polar residues predominate over residues 207–217 (PAGIEPQSNYI). A disordered region spans residues 207–251 (PAGIEPQSNYIPETPPPGYISEDGETSDQQLNQSMDTGSPAELSP). At Thr220 the chain carries Phosphothreonine. Residues 221 to 225 (PPPGY) carry the PY-motif motif. Positions 233–243 (SDQQLNQSMDT) are enriched in polar residues. Ser240 bears the Phosphoserine; by CAMK2 mark. A phosphoserine mark is found at Ser245, Ser250, Ser255, Ser458, Ser460, and Ser464. Residues 274–467 (WCSIAYYELN…SPSVRCSSMS (194 aa)) enclose the MH2 domain. 2 positions are modified to phosphoserine; by TGFBR1: Ser465 and Ser467.

This sequence belongs to the dwarfin/SMAD family. As to quaternary structure, monomer; in the absence of TGF-beta. Heterodimer; in the presence of TGF-beta. Forms a heterodimer with co-SMAD, SMAD4, in the nucleus to form the transactivation complex SMAD2/SMAD4. Found in a complex with SMAD3 and TRIM33 upon addition of TGF-beta. Identified in a complex that contains at least ZNF451, SMAD2, SMAD3 and SMAD4. Interacts (via the MH2 domain) with ZFYVE9; may form trimers with the SMAD4 co-SMAD. Interacts with TAZ/WWRT1. Interacts with FOXH1. Interacts with SNW1. Interacts with CREB-binding protein (CBP) and EP300. Interacts with SNON. Interacts with ALK4/ACVR1B. Interacts with SKOR1. Interacts with SKOR2. Interacts with PRDM16. Interacts (via MH2 domain) with LEMD3. Interacts with RBPMS. Interacts with WWP1. Interacts (dephosphorylated form, via the MH1 and MH2 domains) with RANBP3 (via its C-terminal R domain); the interaction results in the export of dephosphorylated SMAD3 out of the nucleus and termination of the TGF-beta signaling. Interacts with PDPK1 (via PH domain). Interacts with DAB2; the interactions are enhanced upon TGF-beta stimulation. Interacts with USP15. Interacts with PPP5C. Interacts with LDLRAD4 (via the SMAD interaction motif). Interacts (via MH2 domain) with PMEPA1 (via the SMAD interaction motif). Interacts with ZFHX3. Interacts with ZNF451. Interacts with SMURF2 when phosphorylated on Ser-465/467. Interacts with PPM1A. Interacts with TGF-beta. Interacts with TGFBR1. Interacts with TGIF. Interacts with SMAD3 and TRIM33. Interacts with ZNF580. Interacts with NEDD4L in response to TGF-beta. Interacts with HGS. Interacts with AIP1. Interacts with WWP1. Interacts with PML. Interacts weakly with ZNF8. Interacts (when phosphorylated) with RNF111; RNF111 acts as an enhancer of the transcriptional responses by mediating ubiquitination and degradation of SMAD2 inhibitors. Interacts with YAP1 (when phosphorylated at 'Ser-127'). Interacts when phosphorylated with IPO7; the interaction facilitates translocation of SMAD2 to the nucleus. Interacts with MTMR4; negatively regulates TGF-beta signaling through SMAD2 dephosphorylation and retention in endosomes. In terms of processing, phosphorylated on one or several of Thr-220, Ser-245, Ser-250, and Ser-255. In response to TGF-beta, phosphorylated on Ser-465/467 by TGF-beta and activin type 1 receptor kinases. TGF-beta-induced Ser-465/467 phosphorylation declines progressively in a KMT5A-dependent manner. Able to interact with SMURF2 when phosphorylated on Ser-465/467, recruiting other proteins, such as SNON, for degradation. In response to decorin, the naturally occurring inhibitor of TGF-beta signaling, phosphorylated on Ser-240 by CaMK2. Phosphorylated by MAPK3 upon EGF stimulation; which increases transcriptional activity and stability, and is blocked by calmodulin. Phosphorylated by PDPK1. Post-translationally, in response to TGF-beta, ubiquitinated by NEDD4L; which promotes its degradation. Monoubiquitinated, leading to prevent DNA-binding. Deubiquitination by USP15 alleviates inhibition and promotes activation of TGF-beta target genes. Ubiquitinated by RNF111, leading to its degradation: only SMAD2 proteins that are 'in use' are targeted by RNF111, RNF111 playing a key role in activating SMAD2 and regulating its turnover. Acetylated on Lys-19 by coactivators in response to TGF-beta signaling, which increases transcriptional activity. Isoform short: Acetylation increases DNA binding activity in vitro and enhances its association with target promoters in vivo. Acetylation in the nucleus by EP300 is enhanced by TGF-beta. In terms of tissue distribution, expressed at high levels in skeletal muscle, endothelial cells, heart and placenta.

The protein resides in the cytoplasm. It localises to the nucleus. Functionally, receptor-regulated SMAD (R-SMAD) that is an intracellular signal transducer and transcriptional modulator activated by TGF-beta (transforming growth factor) and activin type 1 receptor kinases. Binds the TRE element in the promoter region of many genes that are regulated by TGF-beta and, on formation of the SMAD2/SMAD4 complex, activates transcription. Promotes TGFB1-mediated transcription of odontoblastic differentiation genes in dental papilla cells. Positively regulates PDPK1 kinase activity by stimulating its dissociation from the 14-3-3 protein YWHAQ which acts as a negative regulator. May act as a tumor suppressor in colorectal carcinoma. This is Mothers against decapentaplegic homolog 2 (SMAD2) from Homo sapiens (Human).